An 879-amino-acid polypeptide reads, in one-letter code: DNA mismatch repair protein MutS (879 aa).

Residue 629–636 (GPNMAGKS) coordinates ATP. The segment at 824–845 (VGGQPQKELSEHKPHQPSLFAP) is disordered.

This sequence belongs to the DNA mismatch repair MutS family.

Functionally, this protein is involved in the repair of mismatches in DNA. It is possible that it carries out the mismatch recognition step. This protein has a weak ATPase activity. This Desulfotalea psychrophila (strain LSv54 / DSM 12343) protein is DNA mismatch repair protein MutS.